A 175-amino-acid polypeptide reads, in one-letter code: Protein GrpE (175 aa).

Residues 1–35 (MSEQKQEIENENAQNSENLQDDLQDNEKNETNELQ) are disordered. The span at 25–35 (DNEKNETNELQ) shows a compositional bias: basic and acidic residues.

The protein belongs to the GrpE family. In terms of assembly, homodimer.

Its subcellular location is the cytoplasm. In terms of biological role, participates actively in the response to hyperosmotic and heat shock by preventing the aggregation of stress-denatured proteins, in association with DnaK and GrpE. It is the nucleotide exchange factor for DnaK and may function as a thermosensor. Unfolded proteins bind initially to DnaJ; upon interaction with the DnaJ-bound protein, DnaK hydrolyzes its bound ATP, resulting in the formation of a stable complex. GrpE releases ADP from DnaK; ATP binding to DnaK triggers the release of the substrate protein, thus completing the reaction cycle. Several rounds of ATP-dependent interactions between DnaJ, DnaK and GrpE are required for fully efficient folding. This is Protein GrpE from Campylobacter jejuni (strain RM1221).